The following is a 177-amino-acid chain: Isopentenyl-diphosphate Delta-isomerase 1 (177 aa).

Mn(2+) contacts are provided by H24 and H30. One can recognise a Nudix hydrolase domain in the interval 28–160; sequence SLHRAISIFI…PHAYSFWLEA (133 aa). C65 is a catalytic residue. Residue C65 participates in Mg(2+) binding. A Mn(2+)-binding site is contributed by H67. E85 serves as a coordination point for Mg(2+). Mn(2+) contacts are provided by E110 and E112. E112 is an active-site residue.

It belongs to the IPP isomerase type 1 family. Mg(2+) serves as cofactor. Requires Mn(2+) as cofactor.

The protein localises to the cytoplasm. It carries out the reaction isopentenyl diphosphate = dimethylallyl diphosphate. Its pathway is isoprenoid biosynthesis; dimethylallyl diphosphate biosynthesis; dimethylallyl diphosphate from isopentenyl diphosphate: step 1/1. In terms of biological role, catalyzes the 1,3-allylic rearrangement of the homoallylic substrate isopentenyl (IPP) to its highly electrophilic allylic isomer, dimethylallyl diphosphate (DMAPP). The chain is Isopentenyl-diphosphate Delta-isomerase 1 from Aromatoleum aromaticum (strain DSM 19018 / LMG 30748 / EbN1) (Azoarcus sp. (strain EbN1)).